Here is a 127-residue protein sequence, read N- to C-terminus: Holo-[acyl-carrier-protein] synthase (127 aa).

Positions 9 and 58 each coordinate Mg(2+).

The protein belongs to the P-Pant transferase superfamily. AcpS family. It depends on Mg(2+) as a cofactor.

The protein localises to the cytoplasm. It carries out the reaction apo-[ACP] + CoA = holo-[ACP] + adenosine 3',5'-bisphosphate + H(+). In terms of biological role, transfers the 4'-phosphopantetheine moiety from coenzyme A to a Ser of acyl-carrier-protein. The sequence is that of Holo-[acyl-carrier-protein] synthase from Shewanella putrefaciens (strain CN-32 / ATCC BAA-453).